The primary structure comprises 101 residues: uncharacterized protein (101 aa).

It is found in the cytoplasm. This is an uncharacterized protein from Saccharomyces cerevisiae (strain ATCC 204508 / S288c) (Baker's yeast).